The primary structure comprises 149 residues: D-aminoacyl-tRNA deacylase (149 aa).

The Gly-cisPro motif, important for rejection of L-amino acids motif lies at 139 to 140 (GP).

It belongs to the DTD family. In terms of assembly, homodimer.

The protein resides in the cytoplasm. It carries out the reaction glycyl-tRNA(Ala) + H2O = tRNA(Ala) + glycine + H(+). The enzyme catalyses a D-aminoacyl-tRNA + H2O = a tRNA + a D-alpha-amino acid + H(+). An aminoacyl-tRNA editing enzyme that deacylates mischarged D-aminoacyl-tRNAs. Also deacylates mischarged glycyl-tRNA(Ala), protecting cells against glycine mischarging by AlaRS. Acts via tRNA-based rather than protein-based catalysis; rejects L-amino acids rather than detecting D-amino acids in the active site. By recycling D-aminoacyl-tRNA to D-amino acids and free tRNA molecules, this enzyme counteracts the toxicity associated with the formation of D-aminoacyl-tRNA entities in vivo and helps enforce protein L-homochirality. The chain is D-aminoacyl-tRNA deacylase (DTD1) from Candida glabrata (strain ATCC 2001 / BCRC 20586 / JCM 3761 / NBRC 0622 / NRRL Y-65 / CBS 138) (Yeast).